Consider the following 198-residue polypeptide: MIEFVYPHTHLVAGVDEVGRGPLVGAVVTAAVILDPARPIVGLNDSKKLSEKRRLSLYDEIKEKALSWSLGRAEAHEIDELNILHATMLAMQRAVAGLHIAPEYVLIDGNRCPELPVPSMAVVKGDSRVAEISAASILAKVTRDAEMAALDIVFPQYGFAQHKGYPTAFHLEKLAQYGATAHHRRSFAPVKRALGLVS.

One can recognise an RNase H type-2 domain in the interval 10 to 198 (HLVAGVDEVG…PVKRALGLVS (189 aa)). Positions 16, 17, and 108 each coordinate a divalent metal cation.

The protein belongs to the RNase HII family. The cofactor is Mn(2+). It depends on Mg(2+) as a cofactor.

The protein localises to the cytoplasm. The catalysed reaction is Endonucleolytic cleavage to 5'-phosphomonoester.. Endonuclease that specifically degrades the RNA of RNA-DNA hybrids. This is Ribonuclease HII from Salmonella paratyphi A (strain AKU_12601).